The sequence spans 539 residues: CTP synthase (539 aa).

The interval 1 to 268 (MSFKCIFLTG…STFITEKLGL (268 aa)) is amidoligase domain. S14 contacts CTP. S14 contributes to the UTP binding site. 15 to 20 (SLGKGL) contacts ATP. Residue Y55 coordinates L-glutamine. D72 is a binding site for ATP. Mg(2+) contacts are provided by D72 and E142. Residues 149–151 (DIE), 188–193 (KTKPTQ), and K224 each bind CTP. UTP is bound by residues 188-193 (KTKPTQ) and K224. The Glutamine amidotransferase type-1 domain occupies 294 to 533 (RIGLVGKYVQ…IQAAILYSRN (240 aa)). L-glutamine is bound at residue G353. Residue C380 is the Nucleophile; for glutamine hydrolysis of the active site. Residues 381-384 (LGMQ), E404, and R461 contribute to the L-glutamine site. Residues H506 and E508 contribute to the active site.

The protein belongs to the CTP synthase family. Homotetramer.

It carries out the reaction UTP + L-glutamine + ATP + H2O = CTP + L-glutamate + ADP + phosphate + 2 H(+). It catalyses the reaction L-glutamine + H2O = L-glutamate + NH4(+). The enzyme catalyses UTP + NH4(+) + ATP = CTP + ADP + phosphate + 2 H(+). It participates in pyrimidine metabolism; CTP biosynthesis via de novo pathway; CTP from UDP: step 2/2. Its activity is regulated as follows. Allosterically activated by GTP, when glutamine is the substrate; GTP has no effect on the reaction when ammonia is the substrate. The allosteric effector GTP functions by stabilizing the protein conformation that binds the tetrahedral intermediate(s) formed during glutamine hydrolysis. Inhibited by the product CTP, via allosteric rather than competitive inhibition. Functionally, catalyzes the ATP-dependent amination of UTP to CTP with either L-glutamine or ammonia as the source of nitrogen. Regulates intracellular CTP levels through interactions with the four ribonucleotide triphosphates. The protein is CTP synthase of Chlamydia felis (strain Fe/C-56) (Chlamydophila felis).